Reading from the N-terminus, the 210-residue chain is MSDIGTLSAKGRDRAGKGAARATRREGQVPAVIYGGRQDPVLLSLAPRLIHTEMRKAGFSSRLFDLTVEGGETHRVMVQDVQFHPVTDMPIHVDFLRIGKDTEVTVAIPVHFINETASPGLKRGGVLNVVRHEIEVHGRPDALPDFFEVDLTGAEVGDSIHVGVVKIPEGVRPVIAERDFTICTIAAPSGLKSEEAAAGEAAAAAATPAA.

The interval M1 to T23 is disordered.

The protein belongs to the bacterial ribosomal protein bL25 family. CTC subfamily. As to quaternary structure, part of the 50S ribosomal subunit; part of the 5S rRNA/L5/L18/L25 subcomplex. Contacts the 5S rRNA. Binds to the 5S rRNA independently of L5 and L18.

Functionally, this is one of the proteins that binds to the 5S RNA in the ribosome where it forms part of the central protuberance. In Rhodospirillum rubrum (strain ATCC 11170 / ATH 1.1.1 / DSM 467 / LMG 4362 / NCIMB 8255 / S1), this protein is Large ribosomal subunit protein bL25.